The following is a 235-amino-acid chain: Vacuolar protein sorting-associated protein 60.1 (235 aa).

A disordered region spans residues 1–29 (MRRVFGAKKNTEPPPSIQDASDRINKRGD). A compositionally biased stretch (basic and acidic residues) spans 20–29 (ASDRINKRGD). The stretch at 99 to 148 (LKDAQQTMTALKSANKELKGMMKTVKIQDIDNLQDEMMDLMDVSSEIQES) forms a coiled coil. Positions 175-235 (MGNETEADGM…PAVPRASLRG (61 aa)) are disordered.

This sequence belongs to the SNF7 family. As to quaternary structure, interacts with SKD1/VPS4 and LIP5. Interacts with VPS2.2.

It is found in the endosome. The protein resides in the multivesicular body membrane. Its function is as follows. Probable peripherally associated component of the endosomal sorting required for transport complex III (ESCRT-III) which is involved in multivesicular bodies (MVBs) formation and sorting of endosomal cargo proteins into MVBs. This Arabidopsis thaliana (Mouse-ear cress) protein is Vacuolar protein sorting-associated protein 60.1.